The sequence spans 911 residues: Leucine--tRNA ligase (911 aa).

The short motif at 42-52 (PYPSGKLHMGH) is the 'HIGH' region element. A 'KMSKS' region motif is present at residues 659–663 (TMSKS). Residue lysine 662 participates in ATP binding.

This sequence belongs to the class-I aminoacyl-tRNA synthetase family.

It is found in the cytoplasm. The enzyme catalyses tRNA(Leu) + L-leucine + ATP = L-leucyl-tRNA(Leu) + AMP + diphosphate. This chain is Leucine--tRNA ligase, found in Delftia acidovorans (strain DSM 14801 / SPH-1).